We begin with the raw amino-acid sequence, 362 residues long: MVLASSRPPSPTNSPADRQGTLQAWLTGLSQRIIDGDRLTREEALQLAAIEGEENILLLCEAANRIREACCGNVVDLCSIINVKSGNCSENCGFCSQSSHHPDPNSPIYGLKTEAEILEQARAAAAAGAKRFCLVSQGRGPKYHSPKDREFEQILATVRQIIQETNIKPCCALGEVTPEQAQQLKEAGVTRYNHNLEASATYYDKIVSTHTWQDRVDTVKNLKAAGIQACTGGILGMGETWEDRIDLALALRELEVESVPLNLLNPRPGTPLGEQQKLNPYDALKAIAIFRFILPQQIIRYAGGREAVMGELQDLGLKAGINAMLVGHYLTTLGQPPERDQKLLASLGLEGGEAPIPGEYQS.

The region spanning 70–305 is the Radical SAM core domain; the sequence is CCGNVVDLCS…QQIIRYAGGR (236 aa). Positions 88, 92, and 95 each coordinate [4Fe-4S] cluster. Residues C133, C170, C230, and R300 each contribute to the [2Fe-2S] cluster site.

It belongs to the radical SAM superfamily. Biotin synthase family. Homodimer. It depends on [4Fe-4S] cluster as a cofactor. [2Fe-2S] cluster serves as cofactor.

The enzyme catalyses (4R,5S)-dethiobiotin + (sulfur carrier)-SH + 2 reduced [2Fe-2S]-[ferredoxin] + 2 S-adenosyl-L-methionine = (sulfur carrier)-H + biotin + 2 5'-deoxyadenosine + 2 L-methionine + 2 oxidized [2Fe-2S]-[ferredoxin]. The protein operates within cofactor biosynthesis; biotin biosynthesis; biotin from 7,8-diaminononanoate: step 2/2. In terms of biological role, catalyzes the conversion of dethiobiotin (DTB) to biotin by the insertion of a sulfur atom into dethiobiotin via a radical-based mechanism. The sequence is that of Biotin synthase from Synechocystis sp. (strain ATCC 27184 / PCC 6803 / Kazusa).